A 117-amino-acid polypeptide reads, in one-letter code: Iron-sulfur cluster insertion protein ErpA (117 aa).

Iron-sulfur cluster-binding residues include C45, C109, and C111.

Belongs to the HesB/IscA family. As to quaternary structure, homodimer. Iron-sulfur cluster serves as cofactor.

Functionally, required for insertion of 4Fe-4S clusters for at least IspG. In Ruthia magnifica subsp. Calyptogena magnifica, this protein is Iron-sulfur cluster insertion protein ErpA.